Reading from the N-terminus, the 329-residue chain is Peroxidase 17 (329 aa).

Residues 1-19 (MSLLPHLILYLTLLTVVVT) form the signal peptide. Disulfide bonds link cysteine 32/cysteine 112, cysteine 65/cysteine 70, cysteine 118/cysteine 315, and cysteine 197/cysteine 229. Histidine 63 functions as the Proton acceptor in the catalytic mechanism. Ca(2+) contacts are provided by aspartate 64, valine 67, glycine 69, aspartate 71, and serine 73. Proline 160 contributes to the substrate binding site. Asparagine 165 and asparagine 177 each carry an N-linked (GlcNAc...) asparagine glycan. Histidine 190 contacts heme b. Serine 191 contributes to the Ca(2+) binding site. 2 N-linked (GlcNAc...) asparagine glycosylation sites follow: asparagine 206 and asparagine 236. 3 residues coordinate Ca(2+): aspartate 242, threonine 244, and aspartate 249.

The protein belongs to the peroxidase family. Classical plant (class III) peroxidase subfamily. Heme b is required as a cofactor. It depends on Ca(2+) as a cofactor.

The protein resides in the secreted. Its subcellular location is the vacuole. It carries out the reaction 2 a phenolic donor + H2O2 = 2 a phenolic radical donor + 2 H2O. In terms of biological role, removal of H(2)O(2), oxidation of toxic reductants, biosynthesis and degradation of lignin, suberization, auxin catabolism, response to environmental stresses such as wounding, pathogen attack and oxidative stress. These functions might be dependent on each isozyme/isoform in each plant tissue. The polypeptide is Peroxidase 17 (PER17) (Arabidopsis thaliana (Mouse-ear cress)).